The primary structure comprises 256 residues: Imidazole glycerol phosphate synthase subunit HisF (256 aa).

Active-site residues include Asp12 and Asp131.

It belongs to the HisA/HisF family. In terms of assembly, heterodimer of HisH and HisF.

It localises to the cytoplasm. It carries out the reaction 5-[(5-phospho-1-deoxy-D-ribulos-1-ylimino)methylamino]-1-(5-phospho-beta-D-ribosyl)imidazole-4-carboxamide + L-glutamine = D-erythro-1-(imidazol-4-yl)glycerol 3-phosphate + 5-amino-1-(5-phospho-beta-D-ribosyl)imidazole-4-carboxamide + L-glutamate + H(+). It participates in amino-acid biosynthesis; L-histidine biosynthesis; L-histidine from 5-phospho-alpha-D-ribose 1-diphosphate: step 5/9. Its function is as follows. IGPS catalyzes the conversion of PRFAR and glutamine to IGP, AICAR and glutamate. The HisF subunit catalyzes the cyclization activity that produces IGP and AICAR from PRFAR using the ammonia provided by the HisH subunit. The chain is Imidazole glycerol phosphate synthase subunit HisF from Pseudomonas fluorescens (strain ATCC BAA-477 / NRRL B-23932 / Pf-5).